The primary structure comprises 350 residues: UDP-glucose 4-epimerase GEPI48 (350 aa).

5 to 36 (TVLVTGGAGYIGSHTVLQLLLGGFKAVVVDNL) provides a ligand contact to NAD(+). Ser-130 provides a ligand contact to substrate. The Proton acceptor role is filled by Tyr-154.

It belongs to the NAD(P)-dependent epimerase/dehydratase family. It depends on NAD(+) as a cofactor.

It catalyses the reaction UDP-alpha-D-glucose = UDP-alpha-D-galactose. The protein operates within carbohydrate metabolism; galactose metabolism. The polypeptide is UDP-glucose 4-epimerase GEPI48 (Cyamopsis tetragonoloba (Guar)).